An 89-amino-acid chain; its full sequence is Small ribosomal subunit protein uS15 (89 aa).

This sequence belongs to the universal ribosomal protein uS15 family. As to quaternary structure, part of the 30S ribosomal subunit. Forms a bridge to the 50S subunit in the 70S ribosome, contacting the 23S rRNA.

Functionally, one of the primary rRNA binding proteins, it binds directly to 16S rRNA where it helps nucleate assembly of the platform of the 30S subunit by binding and bridging several RNA helices of the 16S rRNA. Its function is as follows. Forms an intersubunit bridge (bridge B4) with the 23S rRNA of the 50S subunit in the ribosome. This Vibrio vulnificus (strain YJ016) protein is Small ribosomal subunit protein uS15.